A 152-amino-acid polypeptide reads, in one-letter code: Deoxyuridine 5'-triphosphate nucleotidohydrolase (152 aa).

Residues 71-73 (RSG), Asn84, 88-90 (LID), and Met98 contribute to the substrate site.

It belongs to the dUTPase family. It depends on Mg(2+) as a cofactor.

The catalysed reaction is dUTP + H2O = dUMP + diphosphate + H(+). It functions in the pathway pyrimidine metabolism; dUMP biosynthesis; dUMP from dCTP (dUTP route): step 2/2. Functionally, this enzyme is involved in nucleotide metabolism: it produces dUMP, the immediate precursor of thymidine nucleotides and it decreases the intracellular concentration of dUTP so that uracil cannot be incorporated into DNA. This is Deoxyuridine 5'-triphosphate nucleotidohydrolase from Shigella flexneri.